The primary structure comprises 233 residues: MARAMHTVWIALVPTLFVFLQGINVKAATFDITNQCPYTVWAAASPGGGRQLAKGQTWTIQVPAGTTGGRVWARTGCSFDRSGRGTCQTGDCNGMLSCQGYGQVPATLAEYALNQYMNLDFYDISLVDGFNVPISMTPTSTNPNCKGRITCLSDINSKCPSELKVNGGCKSACARYNTAQYCCTGASANNCGPTNYSKFFKGQCPQAYSYAKDDATSTFTCPSGTNYKVVFCG.

A signal peptide spans 1–22 (MARAMHTVWIALVPTLFVFLQG). Disulfide bonds link Cys-36-Cys-232, Cys-77-Cys-87, Cys-92-Cys-98, Cys-145-Cys-221, Cys-151-Cys-204, Cys-159-Cys-169, Cys-173-Cys-182, and Cys-183-Cys-191. A glycan (N-linked (GlcNAc...) asparagine) is linked at Asn-195.

The protein belongs to the thaumatin family. As to expression, strongly expressed in roots and in female and male strobili, and, to a lower extent, in cotyledons, leaves, stems and pollen grains.

Its function is as follows. May be involved in disease resistance. In Cryptomeria japonica (Japanese cedar), this protein is Pathogenesis-related thaumatin-like protein 3.2.